Consider the following 401-residue polypeptide: Probable trafficking protein particle complex subunit 13 homolog (401 aa).

This sequence belongs to the TRAPPC13 family.

The polypeptide is Probable trafficking protein particle complex subunit 13 homolog (Caenorhabditis briggsae).